A 314-amino-acid polypeptide reads, in one-letter code: Taste receptor type 2 member 42 (314 aa).

The Extracellular segment spans residues 1–7 (MATELDK). A helical membrane pass occupies residues 8-28 (IFLILEIAEFIIGMLGNVFIG). Residues 29–50 (LVNCSEGIKNQKVFSADFILTC) are Cytoplasmic-facing. A helical transmembrane segment spans residues 51–71 (LAISTIGQLFVILFDSFLVGL). Topologically, residues 72-101 (ASHLYTTYRLGKPVIMLWHMTNHLTTWLAT) are extracellular. Residues 102–122 (CLSIFYFFKIAHFPHSLFLWL) form a helical membrane-spanning segment. The Cytoplasmic segment spans residues 123–127 (RWRMN). A helical transmembrane segment spans residues 128–148 (GMIVMLLILSLFLLIFNSLVL). Residues 149 to 187 (EIFIDISLNIIDKSNLTLYLDESKTVYDKLSILKTLLSL) lie on the Extracellular side of the membrane. N163 carries N-linked (GlcNAc...) asparagine glycosylation. A helical membrane pass occupies residues 188 to 208 (TSFIPFSLSLTSLLFLFLSLV). Topologically, residues 209 to 238 (RHTRNLKLSSLGSRDSSTEAHRRAMKMVMS) are cytoplasmic. The chain crosses the membrane as a helical span at residues 239-259 (FLFLFIVHFFSLQVANWIFFM). The Extracellular segment spans residues 260–265 (LWNNKY). The chain crosses the membrane as a helical span at residues 266-286 (IKFAMLALNAFPSCHSFILIL). The Cytoplasmic segment spans residues 287 to 314 (GNSKLRQTAVRLLWHLRNYTKTPNPLPL).

It belongs to the G-protein coupled receptor T2R family.

The protein resides in the membrane. In terms of biological role, receptor that may play a role in the perception of bitterness and is gustducin-linked. May play a role in sensing the chemical composition of the gastrointestinal content. The activity of this receptor may stimulate alpha gustducin, mediate PLC-beta-2 activation and lead to the gating of TRPM5. The protein is Taste receptor type 2 member 42 (TAS2R42) of Pan troglodytes (Chimpanzee).